We begin with the raw amino-acid sequence, 398 residues long: Glycerol-3-phosphate dehydrogenase [NAD(+)] 1 (398 aa).

NAD(+) is bound by residues 50–55 (GSGNWG), F138, K161, and A194. K161 is a substrate binding site. K253 (proton acceptor) is an active-site residue. NAD(+) is bound by residues R318 and Q350. 318–319 (RN) serves as a coordination point for substrate.

The protein belongs to the NAD-dependent glycerol-3-phosphate dehydrogenase family.

It localises to the cytoplasm. It carries out the reaction sn-glycerol 3-phosphate + NAD(+) = dihydroxyacetone phosphate + NADH + H(+). The chain is Glycerol-3-phosphate dehydrogenase [NAD(+)] 1 (GPD1) from Yarrowia lipolytica (strain CLIB 122 / E 150) (Yeast).